The primary structure comprises 319 residues: Acetyl-coenzyme A carboxylase carboxyl transferase subunit alpha (319 aa).

Residues 35-296 (DLEKEIKQLE…KQRLLEQLKE (262 aa)) form the CoA carboxyltransferase C-terminal domain.

This sequence belongs to the AccA family. In terms of assembly, acetyl-CoA carboxylase is a heterohexamer composed of biotin carboxyl carrier protein (AccB), biotin carboxylase (AccC) and two subunits each of ACCase subunit alpha (AccA) and ACCase subunit beta (AccD).

Its subcellular location is the cytoplasm. It catalyses the reaction N(6)-carboxybiotinyl-L-lysyl-[protein] + acetyl-CoA = N(6)-biotinyl-L-lysyl-[protein] + malonyl-CoA. Its pathway is lipid metabolism; malonyl-CoA biosynthesis; malonyl-CoA from acetyl-CoA: step 1/1. In terms of biological role, component of the acetyl coenzyme A carboxylase (ACC) complex. First, biotin carboxylase catalyzes the carboxylation of biotin on its carrier protein (BCCP) and then the CO(2) group is transferred by the carboxyltransferase to acetyl-CoA to form malonyl-CoA. This is Acetyl-coenzyme A carboxylase carboxyl transferase subunit alpha from Aliivibrio fischeri (strain ATCC 700601 / ES114) (Vibrio fischeri).